The sequence spans 111 residues: uncharacterized protein (111 aa).

This sequence belongs to the UPF0440 family.

This is an uncharacterized protein from Pyrococcus furiosus (strain ATCC 43587 / DSM 3638 / JCM 8422 / Vc1).